A 99-amino-acid polypeptide reads, in one-letter code: UPF0213 protein YazA (99 aa).

The 76-residue stretch at 4–79 (NNHFFYVVKC…KKLTRKKKEL (76 aa)) folds into the GIY-YIG domain.

It belongs to the UPF0213 family.

The protein is UPF0213 protein YazA (yazA) of Bacillus subtilis (strain 168).